Consider the following 129-residue polypeptide: Ribosome-binding factor A (129 aa).

Belongs to the RbfA family. As to quaternary structure, monomer. Binds 30S ribosomal subunits, but not 50S ribosomal subunits or 70S ribosomes.

The protein resides in the cytoplasm. Its function is as follows. One of several proteins that assist in the late maturation steps of the functional core of the 30S ribosomal subunit. Associates with free 30S ribosomal subunits (but not with 30S subunits that are part of 70S ribosomes or polysomes). Required for efficient processing of 16S rRNA. May interact with the 5'-terminal helix region of 16S rRNA. The protein is Ribosome-binding factor A of Pseudomonas aeruginosa (strain UCBPP-PA14).